Consider the following 114-residue polypeptide: U17-barytoxin-Tl1d (114 aa).

The first 20 residues, M1 to A20, serve as a signal peptide directing secretion. A propeptide spanning residues N21–R74 is cleaved from the precursor. 3 disulfides stabilise this stretch: C75/C88, C82/C93, and C87/C108.

Belongs to the neurotoxin 14 (magi-1) family. 03 (ICK-30-40) subfamily. In terms of tissue distribution, expressed by the venom gland.

It localises to the secreted. Its function is as follows. Ion channel inhibitor. The polypeptide is U17-barytoxin-Tl1d (Trittame loki (Brush-footed trapdoor spider)).